Reading from the N-terminus, the 624-residue chain is Ubiquilin-2 (624 aa).

2 disordered regions span residues 1 to 32 (MAEN…EPKI) and 106 to 141 (NRPQ…TNSN). The residue at position 2 (alanine 2) is an N-acetylalanine. The segment covering 15 to 32 (RGPAAAQGSAAAPAEPKI) has biased composition (low complexity). In terms of domain architecture, Ubiquitin-like spans 33-107 (IKVTVKTPKE…VHLVIKSQNR (75 aa)). The span at 106 to 115 (NRPQGQSTQP) shows a compositional bias: polar residues. The span at 116–141 (SNAAGTNTTSASTPRSNSTPISTNSN) shows a compositional bias: low complexity. STI1 domains lie at 178–206 (SPEM…QLIM) and 208–247 (NPQM…MQEM). A disordered region spans residues 287–349 (FGGNPFASVG…SGSGNSSSNA (63 aa)). Positions 294-304 (SVGSSSSSGEG) are enriched in low complexity. The span at 316–325 (LPNPWAPPPA) shows a compositional bias: pro residues. Over residues 326–349 (TQSSATTSTTTSTGSGSGNSSSNA) the composition is skewed to low complexity. 2 STI1 domains span residues 379–426 (NPQL…QEQM) and 430–462 (LPAF…QQGL). 12 tandem repeats follow at residues 491-493 (PVG), 494-496 (PVT), 497-499 (PIG), 500-502 (PIG), 503-505 (PIV), 506-508 (PFT), 509-511 (PIG), 512-514 (PIG), 515-517 (PIG), 518-520 (PTG), 521-523 (PAA), and 524-526 (PPG). Residues 491-526 (PVGPVTPIGPIGPIVPFTPIGPIGPIGPTGPAAPPG) are 12 X 3 AA tandem repeats of P-X-X. A disordered region spans residues 512 to 556 (PIGPIGPTGPAAPPGSTGSGGPTGPTVSSAAPSETTSPTSESGPN). The span at 535-553 (GPTVSSAAPSETTSPTSES) shows a compositional bias: low complexity. The UBA domain maps to 581–621 (RFQQQLEQLNAMGFLNREANLQALIATGGDINAAIERLLGS).

As to quaternary structure, homodimer. Forms heterodimer with UBQLN1. Binds UBE3A and BTRC. Interacts with the 19S proteasome subunit. Interacts with C9orf72. Interacts with HNRNPA1 and HNRNPU. Found in a complex with UBQLN1 and MAP1LC3A/B/C. Interacts with EPS15, EPN1 and EPN2. Interacts with HERPUD1. Interacts with RAD23A. Interacts with TARDBP. Interacts (via C-terminus) with FAF2 (via N-terminus). Interacts with UBQLN4. Binds CD47. Post-translationally, degraded during macroautophagy.

Its subcellular location is the cytoplasm. It localises to the nucleus. It is found in the membrane. The protein localises to the cytoplasmic vesicle. The protein resides in the autophagosome. Plays an important role in the regulation of different protein degradation mechanisms and pathways including ubiquitin-proteasome system (UPS), autophagy and the endoplasmic reticulum-associated protein degradation (ERAD) pathway. Mediates the proteasomal targeting of misfolded or accumulated proteins for degradation by binding (via UBA domain) to their polyubiquitin chains and by interacting (via ubiquitin-like domain) with the subunits of the proteasome. Plays a role in the ERAD pathway via its interaction with ER-localized proteins FAF2/UBXD8 and HERPUD1 and may form a link between the polyubiquitinated ERAD substrates and the proteasome. Involved in the regulation of macroautophagy and autophagosome formation; required for maturation of autophagy-related protein LC3 from the cytosolic form LC3-I to the membrane-bound form LC3-II and may assist in the maturation of autophagosomes to autolysosomes by mediating autophagosome-lysosome fusion. Negatively regulates the endocytosis of GPCR receptors: AVPR2 and ADRB2, by specifically reducing the rate at which receptor-arrestin complexes concentrate in clathrin-coated pits (CCPs). The sequence is that of Ubiquilin-2 (UBQLN2) from Homo sapiens (Human).